A 59-amino-acid polypeptide reads, in one-letter code: UPF0509 protein KPK_3153 (59 aa).

The protein belongs to the UPF0509 family.

In Klebsiella pneumoniae (strain 342), this protein is UPF0509 protein KPK_3153.